Consider the following 205-residue polypeptide: Large ribosomal subunit protein uL4 (205 aa).

This sequence belongs to the universal ribosomal protein uL4 family. In terms of assembly, part of the 50S ribosomal subunit.

One of the primary rRNA binding proteins, this protein initially binds near the 5'-end of the 23S rRNA. It is important during the early stages of 50S assembly. It makes multiple contacts with different domains of the 23S rRNA in the assembled 50S subunit and ribosome. Its function is as follows. Forms part of the polypeptide exit tunnel. This Thermus thermophilus (strain ATCC BAA-163 / DSM 7039 / HB27) protein is Large ribosomal subunit protein uL4.